The chain runs to 75 residues: UPF0270 protein PSPPH_1506 (75 aa).

This sequence belongs to the UPF0270 family.

The chain is UPF0270 protein PSPPH_1506 from Pseudomonas savastanoi pv. phaseolicola (strain 1448A / Race 6) (Pseudomonas syringae pv. phaseolicola (strain 1448A / Race 6)).